The sequence spans 358 residues: Methylthioribose-1-phosphate isomerase (358 aa).

Substrate-binding positions include 54–56, Arg-96, and Gln-205; that span reads RGA. The active-site Proton donor is the Asp-246. 256–257 is a binding site for substrate; it reads NK.

This sequence belongs to the eIF-2B alpha/beta/delta subunits family. MtnA subfamily.

The catalysed reaction is 5-(methylsulfanyl)-alpha-D-ribose 1-phosphate = 5-(methylsulfanyl)-D-ribulose 1-phosphate. It functions in the pathway amino-acid biosynthesis; L-methionine biosynthesis via salvage pathway; L-methionine from S-methyl-5-thio-alpha-D-ribose 1-phosphate: step 1/6. In terms of biological role, catalyzes the interconversion of methylthioribose-1-phosphate (MTR-1-P) into methylthioribulose-1-phosphate (MTRu-1-P). The protein is Methylthioribose-1-phosphate isomerase of Pseudomonas fluorescens (strain Pf0-1).